We begin with the raw amino-acid sequence, 535 residues long: Probable galacturonosyltransferase 12 (535 aa).

The Cytoplasmic portion of the chain corresponds to 1–37; it reads MQLHISPSLRHVTVVTGKGLREFIKVKVGSRRFSYQM. Residues 38–58 form a helical; Signal-anchor for type II membrane protein membrane-spanning segment; the sequence is VFYSLLFFTFLLRFVFVLSTV. The Lumenal segment spans residues 59–535; it reads DTIDGDPSPC…FIKSCHIRAS (477 aa). N-linked (GlcNAc...) asparagine glycosylation is found at Asn397 and Asn430.

The protein belongs to the glycosyltransferase 8 family. As to expression, highly expressed in stems. Detected in roots, inflorescences, siliques, and leaves. Expressed in cells undergoing secondary wall thickening, including interfascicular fibers and primary and secondary xylem.

Its subcellular location is the golgi apparatus membrane. It participates in glycan metabolism; pectin biosynthesis. Its function is as follows. Involved in pectin assembly and/or distribution, and in the synthesis of secondary wall glucuronoxylan. Probably involved in the synthesis of the glycosyl sequence at the glucuronoxylan reducing end. May be involved in synthesis of a complex glycan primer for xylan synthesis. The sequence is that of Probable galacturonosyltransferase 12 (GAUT12) from Arabidopsis thaliana (Mouse-ear cress).